Consider the following 102-residue polypeptide: MGTRRSNAEHAYVVAYDIADPKRWRQVFKTMKGYGQWVQLSVFQCRLDGGRRIAMASILESLIDRETDHVLMLDLGPAEDVDLAVESLGKAFETLERQAMII.

D17 is a binding site for Mg(2+).

It belongs to the CRISPR-associated endoribonuclease Cas2 protein family. As to quaternary structure, homodimer, forms a heterotetramer with a Cas1 homodimer. It depends on Mg(2+) as a cofactor.

Its function is as follows. CRISPR (clustered regularly interspaced short palindromic repeat), is an adaptive immune system that provides protection against mobile genetic elements (viruses, transposable elements and conjugative plasmids). CRISPR clusters contain sequences complementary to antecedent mobile elements and target invading nucleic acids. CRISPR clusters are transcribed and processed into CRISPR RNA (crRNA). Functions as a ssRNA-specific endoribonuclease. Involved in the integration of spacer DNA into the CRISPR cassette. This Rhodospirillum rubrum (strain ATCC 11170 / ATH 1.1.1 / DSM 467 / LMG 4362 / NCIMB 8255 / S1) protein is CRISPR-associated endoribonuclease Cas2 1.